A 773-amino-acid polypeptide reads, in one-letter code: Angiomotin-like protein 2 (773 aa).

Disordered regions lie at residues 41–157 (GGAG…HVRS), 169–238 (RNGA…SPHF), and 259–309 (QYQY…LAQM). Basic and acidic residues-rich tracts occupy residues 80–91 (QGGETHLAENRL), 100–112 (KGEELPTYEEAKA), and 141–152 (RRQDEALRELRH). The segment at 101–302 (GEELPTYEEA…GPPGAQATSG (202 aa)) is required for interaction with CDH5. Y107 bears the Phosphotyrosine; by FGFR1 mark. Residues 177–190 (HMSSSHSFPQLARS) show a composition bias toward polar residues. Positions 196-213 (PRGPPAEGPEPRGPPPQY) are enriched in pro residues. The interval 220–302 (QETAAVNDPR…GPPGAQATSG (83 aa)) is required for interaction with CDH1. Residues 304-577 (AHLAQMESVL…KYLEERAMRQ (274 aa)) are a coiled coil. Residues K342 and K403 each participate in a glycyl lysine isopeptide (Lys-Gly) (interchain with G-Cter in ubiquitin) cross-link. Disordered regions lie at residues 589-611 (QRDTTLIRHSPQPSPSSSFNEGL) and 677-754 (WQGF…TTSL). Residues 701-710 (EEPPATPPLP) show a composition bias toward pro residues. A compositionally biased stretch (polar residues) spans 719 to 734 (DGSTQTDGPADSTSAC). Phosphoserine is present on residues S753 and S756. The short motif at 770-773 (EILI) is the PDZ-binding element.

Belongs to the angiomotin family. Part of a complex composed of AMOTL2, MAGI1 and CDH5, within the complex AMOTL2 acts as a scaffold protein for the interaction of MAGI1 with CDH5. The complex is required for coupling actin fibers to cell junctions in endothelial cells. Within the complex AMOTL2 (via its N-terminus) interacts with CDH5. Interacts (via N-terminus) with MAGI1. Interacts (via N-terminus) with ACTB; the interaction facilitates binding of cell junction complexes to actin fibers in endothelial cells. Interacts with CDH1; the interaction may facilitate binding of radial actin fibers to cell junction complexes. Interacts with SRC. Interacts with YAP1; the interaction is required for ubiquitination of AMOTL2 and localization of YAP1 to tight junctions. Interacts with WWP1; the interaction facilitates WWP1 interaction with the Crumbs complex and subsequent WWP1 translocation to the plasma membrane. WWP1 interaction with the Crumbs complex promotes WWP1 monoubiquitination of AMOTL2 which subsequently activates the Hippo signaling pathway. When ubiquitinated interacts with LATS2 (via UBA domain); the interaction promotes LATS2 phosphorylation of YAP1. Interacts (via PPXY motif) with WWTR1/TAZ (via WW domain); the interaction promotes WWTR1/TAZ localization to the cytoplasm and thereby inhibition of its transcriptional properties. Interacts with PHLDB2; interaction may facilitate PHLDB2 localization to the myotube podosome cortex that surrounds the core. In terms of processing, monoubiquitinated at Lys-342 and Lys-403 by Crumbs complex-bound WWP1. De-ubiquitinated at Lys-342 and Lys-403 by USP9X; the interaction may be promoted by cell contact inhibition. Deubiquitination of AMOTL2 negatively regulates Hippo signaling activation. Phosphorylation at Tyr-107 is necessary for efficient binding to SRC and synergistically functioning with SRC to activate the downstream MAPK pathway.

The protein resides in the recycling endosome. Its subcellular location is the cytoplasm. The protein localises to the cell projection. It localises to the podosome. It is found in the cell junction. In terms of biological role, regulates the translocation of phosphorylated SRC to peripheral cell-matrix adhesion sites. Required for proper architecture of actin filaments. Plays a role in coupling actin fibers to cell junctions in endothelial cells and is therefore required for correct endothelial cell morphology via facilitating transcellular transmission of mechanical force resulting in endothelial cell elongation. Required for the anchoring of radial actin fibers to CDH1 junction complexes at the cell membrane which facilitates organization of radial actin fiber structure and cellular response to contractile forces. This contributes to maintenance of cell area, size, shape, epithelial sheet organization and trophectoderm cell properties that facilitate blastocyst zona hatching. Inhibits the Wnt/beta-catenin signaling pathway, probably by recruiting CTNNB1 to recycling endosomes and hence preventing its translocation to the nucleus. Participates in angiogenesis. Activates the Hippo signaling pathway in response to cell contact inhibition via interaction with and ubiquitination by Crumbs complex-bound WWP1. Ubiquitinated AMOTL2 then interacts with LATS2 which in turn phosphorylates YAP1, excluding it from the nucleus and localizing it to the cytoplasm and tight junctions, therefore ultimately repressing YAP1-driven transcription of target genes. Acts to inhibit WWTR1/TAZ transcriptional coactivator activity via sequestering WWTR1/TAZ in the cytoplasm and at tight junctions. Regulates the size and protein composition of the podosome cortex and core at myofibril neuromuscular junctions. Selectively promotes FGF-induced MAPK activation through SRC. May play a role in the polarity, proliferation and migration of endothelial cells. The chain is Angiomotin-like protein 2 from Rattus norvegicus (Rat).